We begin with the raw amino-acid sequence, 257 residues long: Type III pantothenate kinase (257 aa).

6–13 is an ATP binding site; the sequence is DSGNTNTV. 108 to 111 is a binding site for substrate; the sequence is GADR. The Proton acceptor role is filled by aspartate 110. Aspartate 130 lines the K(+) pocket. Threonine 133 is a binding site for ATP. Threonine 185 contacts substrate.

It belongs to the type III pantothenate kinase family. As to quaternary structure, homodimer. The cofactor is NH4(+). It depends on K(+) as a cofactor.

It localises to the cytoplasm. It catalyses the reaction (R)-pantothenate + ATP = (R)-4'-phosphopantothenate + ADP + H(+). It participates in cofactor biosynthesis; coenzyme A biosynthesis; CoA from (R)-pantothenate: step 1/5. Functionally, catalyzes the phosphorylation of pantothenate (Pan), the first step in CoA biosynthesis. This chain is Type III pantothenate kinase, found in Rhodospirillum rubrum (strain ATCC 11170 / ATH 1.1.1 / DSM 467 / LMG 4362 / NCIMB 8255 / S1).